Consider the following 193-residue polypeptide: Holliday junction branch migration complex subunit RuvA (193 aa).

The tract at residues 1 to 64 (MIGRIQGTLV…EDAQQLFGFA (64 aa)) is domain I. The segment at 65–139 (TETEREAFRQ…GKLAPDLGVA (75 aa)) is domain II. The segment at 139–143 (AGGKP) is flexible linker. The interval 144–193 (QAIETSSEVLQALLALGYSEKEALLALKQIPADTSISDGIRMGLKYLSKA) is domain III.

This sequence belongs to the RuvA family. As to quaternary structure, homotetramer. Forms an RuvA(8)-RuvB(12)-Holliday junction (HJ) complex. HJ DNA is sandwiched between 2 RuvA tetramers; dsDNA enters through RuvA and exits via RuvB. An RuvB hexamer assembles on each DNA strand where it exits the tetramer. Each RuvB hexamer is contacted by two RuvA subunits (via domain III) on 2 adjacent RuvB subunits; this complex drives branch migration. In the full resolvosome a probable DNA-RuvA(4)-RuvB(12)-RuvC(2) complex forms which resolves the HJ.

Its subcellular location is the cytoplasm. The RuvA-RuvB-RuvC complex processes Holliday junction (HJ) DNA during genetic recombination and DNA repair, while the RuvA-RuvB complex plays an important role in the rescue of blocked DNA replication forks via replication fork reversal (RFR). RuvA specifically binds to HJ cruciform DNA, conferring on it an open structure. The RuvB hexamer acts as an ATP-dependent pump, pulling dsDNA into and through the RuvAB complex. HJ branch migration allows RuvC to scan DNA until it finds its consensus sequence, where it cleaves and resolves the cruciform DNA. The chain is Holliday junction branch migration complex subunit RuvA from Polynucleobacter necessarius subsp. necessarius (strain STIR1).